The chain runs to 552 residues: Hyaluronan synthase 2 (552 aa).

Residues 1–11 (MHCERFLCVLR) are Cytoplasmic-facing. The chain crosses the membrane as a helical span at residues 12 to 32 (IIGTTLFGVSLLLGITAAYIV). Residues 33–45 (GYQFIQTDNYYFS) lie on the Extracellular side of the membrane. The helical transmembrane segment at 46–66 (FGLYGAFLASHLIIQSLFAFL) threads the bilayer. The Cytoplasmic portion of the chain corresponds to 67–374 (EHRKMKKSLE…NAMWFHKHHL (308 aa)). Residue threonine 110 is modified to Phosphothreonine. A Glycyl lysine isopeptide (Lys-Gly) (interchain with G-Cter in ubiquitin) cross-link involves residue lysine 190. Serine 221 carries O-linked (GlcNAc) serine glycosylation. Phosphothreonine is present on threonine 328. Residues 375–395 (WMTYEAVITGFFPFFLIATVI) form a helical membrane-spanning segment. Over 396-402 (QLFYRGK) the chain is Extracellular. Residues 403 to 423 (IWNILLFLLTVQLVGLIKSSF) traverse the membrane as a helical segment. The Cytoplasmic portion of the chain corresponds to 424–429 (ASCLRG). The helical transmembrane segment at 430-450 (NIVMVFMSLYSVLYMSSLLPA) threads the bilayer. Residues 451 to 475 (KMFAIATINKAGWGTSGRKTIVVNF) are Extracellular-facing. Residues 476–496 (IGLIPVSVWFTILLGGVIFTI) form a helical membrane-spanning segment. At 497–510 (YKESKKPFSESKQT) the chain is on the cytoplasmic side. The chain crosses the membrane as a helical span at residues 511 to 531 (VLIVGTLIYACYWVMLLTLYV). The Extracellular portion of the chain corresponds to 532–552 (VLINKCGRRKKGQQYDMVLDV).

Belongs to the NodC/HAS family. In terms of assembly, homodimer; dimerization promotes enzymatic activity. Forms heterodimer with HAS3. Forms heterodimer with HAS1. Mg(2+) is required as a cofactor. In terms of processing, phosphorylation at Thr-328 is essential for hyaluronan synthase activity. Post-translationally, O-GlcNAcylation at Ser-221 increases the stability of HAS2 and plasma membrane localization. Ubiquitination at Lys-190; this ubiquitination is essential for hyaluronan synthase activity and homo- or hetero-oligomerization. Can also be poly-ubiquitinated. Deubiquitinated by USP17L22/USP17 and USP4. USP17L22/USP17 efficiently removes 'Lys-63'- and 'Lys-48'-linked polyubiquitin chains, whereas USP4 preferentially removes monoubiquitination and, partially, both 'Lys-63'- and 'Lys-48'-linked polyubiquitin chain. In terms of tissue distribution, expressed in heart, brain, spleen, lung and skeletal muscle.

It is found in the cell membrane. The protein localises to the endoplasmic reticulum membrane. Its subcellular location is the vesicle. The protein resides in the golgi apparatus membrane. It localises to the lysosome. The enzyme catalyses [hyaluronan](n) + UDP-N-acetyl-alpha-D-glucosamine = N-acetyl-beta-D-glucosaminyl-(1-&gt;4)-[hyaluronan](n) + UDP + H(+). The catalysed reaction is N-acetyl-beta-D-glucosaminyl-(1-&gt;4)-[hyaluronan](n) + UDP-alpha-D-glucuronate = [hyaluronan](n+1) + UDP + H(+). It participates in glycan biosynthesis; hyaluronan biosynthesis. Functionally, catalyzes the addition of GlcNAc or GlcUA monosaccharides to the nascent hyaluronan polymer. Therefore, it is essential to hyaluronan synthesis a major component of most extracellular matrices that has a structural role in tissues architectures and regulates cell adhesion, migration and differentiation. This is one of the isozymes catalyzing that reaction and it is particularly responsible for the synthesis of high molecular mass hyaluronan. Required for the transition of endocardial cushion cells into mesenchymal cells, a process crucial for heart development. May also play a role in vasculogenesis. High molecular mass hyaluronan also play a role in early contact inhibition a process which stops cell growth when cells come into contact with each other or the extracellular matrix. Its function is as follows. Catalyzes the addition of GlcNAc or GlcUA monosaccharides to the nascent hyaluronan polymer. Therefore, it is essential to hyaluronan synthesis a major component of most extracellular matrices that has a structural role in tissues architectures and regulates cell adhesion, migration and differentiation. This is one of three isoenzymes responsible for cellular hyaluronan synthesis and it is particularly responsible for the synthesis of high molecular mass hyaluronan. This Mus musculus (Mouse) protein is Hyaluronan synthase 2.